Consider the following 125-residue polypeptide: uncharacterized protein (125 aa).

This is an uncharacterized protein from Mycoplasma (Bacteriophage L2).